The following is a 417-amino-acid chain: Serine hydroxymethyltransferase (417 aa).

(6S)-5,6,7,8-tetrahydrofolate-binding positions include L121 and 125-127 (GHL). An N6-(pyridoxal phosphate)lysine modification is found at K229. Residue 355-357 (SPF) coordinates (6S)-5,6,7,8-tetrahydrofolate.

Belongs to the SHMT family. Homodimer. Pyridoxal 5'-phosphate serves as cofactor.

It is found in the cytoplasm. The catalysed reaction is (6R)-5,10-methylene-5,6,7,8-tetrahydrofolate + glycine + H2O = (6S)-5,6,7,8-tetrahydrofolate + L-serine. The protein operates within one-carbon metabolism; tetrahydrofolate interconversion. Its pathway is amino-acid biosynthesis; glycine biosynthesis; glycine from L-serine: step 1/1. Its function is as follows. Catalyzes the reversible interconversion of serine and glycine with tetrahydrofolate (THF) serving as the one-carbon carrier. This reaction serves as the major source of one-carbon groups required for the biosynthesis of purines, thymidylate, methionine, and other important biomolecules. Also exhibits THF-independent aldolase activity toward beta-hydroxyamino acids, producing glycine and aldehydes, via a retro-aldol mechanism. This chain is Serine hydroxymethyltransferase, found in Stenotrophomonas maltophilia (strain K279a).